Here is a 307-residue protein sequence, read N- to C-terminus: 4-hydroxybenzoate octaprenyltransferase (307 aa).

Transmembrane regions (helical) follow at residues 27 to 47 (AGWL…AGGF), 50 to 70 (WHLL…GCCI), 101 to 121 (LAVG…TNAL), 142 to 162 (CVAM…PMAF), 179 to 199 (AAVP…VLAY), 239 to 259 (LLAW…AAGL), and 285 to 305 (FRLN…DLGW).

The protein belongs to the UbiA prenyltransferase family. The cofactor is Mg(2+).

It localises to the cell inner membrane. The catalysed reaction is all-trans-octaprenyl diphosphate + 4-hydroxybenzoate = 4-hydroxy-3-(all-trans-octaprenyl)benzoate + diphosphate. The protein operates within cofactor biosynthesis; ubiquinone biosynthesis. In terms of biological role, catalyzes the prenylation of para-hydroxybenzoate (PHB) with an all-trans polyprenyl group. Mediates the second step in the final reaction sequence of ubiquinone-8 (UQ-8) biosynthesis, which is the condensation of the polyisoprenoid side chain with PHB, generating the first membrane-bound Q intermediate 3-octaprenyl-4-hydroxybenzoate. This Methylibium petroleiphilum (strain ATCC BAA-1232 / LMG 22953 / PM1) protein is 4-hydroxybenzoate octaprenyltransferase.